Consider the following 300-residue polypeptide: Mycothiol acetyltransferase (300 aa).

N-acetyltransferase domains are found at residues 4–140 (IDWR…RPLT) and 151–300 (VRLA…AVAD). Residue D36 participates in 1D-myo-inositol 2-(L-cysteinylamino)-2-deoxy-alpha-D-glucopyranoside binding. Residue 79-81 (LVV) coordinates acetyl-CoA. Residues E178, K219, and E227 each coordinate 1D-myo-inositol 2-(L-cysteinylamino)-2-deoxy-alpha-D-glucopyranoside. 231–233 (VGV) contributes to the acetyl-CoA binding site. Y269 is a binding site for 1D-myo-inositol 2-(L-cysteinylamino)-2-deoxy-alpha-D-glucopyranoside. Position 274-279 (274-279 (NGAAVK)) interacts with acetyl-CoA.

The protein belongs to the acetyltransferase family. MshD subfamily. As to quaternary structure, monomer.

The enzyme catalyses 1D-myo-inositol 2-(L-cysteinylamino)-2-deoxy-alpha-D-glucopyranoside + acetyl-CoA = mycothiol + CoA + H(+). Functionally, catalyzes the transfer of acetyl from acetyl-CoA to desacetylmycothiol (Cys-GlcN-Ins) to form mycothiol. This is Mycothiol acetyltransferase from Mycobacterium sp. (strain MCS).